The primary structure comprises 195 residues: Peptidyl-tRNA hydrolase (195 aa).

Tyr18 is a binding site for tRNA. The Proton acceptor role is filled by His23. TRNA contacts are provided by Phe69, Asn71, and Asn117.

The protein belongs to the PTH family. In terms of assembly, monomer.

It localises to the cytoplasm. It catalyses the reaction an N-acyl-L-alpha-aminoacyl-tRNA + H2O = an N-acyl-L-amino acid + a tRNA + H(+). Functionally, hydrolyzes ribosome-free peptidyl-tRNAs (with 1 or more amino acids incorporated), which drop off the ribosome during protein synthesis, or as a result of ribosome stalling. In terms of biological role, catalyzes the release of premature peptidyl moieties from peptidyl-tRNA molecules trapped in stalled 50S ribosomal subunits, and thus maintains levels of free tRNAs and 50S ribosomes. This chain is Peptidyl-tRNA hydrolase, found in Hahella chejuensis (strain KCTC 2396).